Reading from the N-terminus, the 498-residue chain is ATP synthase subunit beta, chloroplastic (498 aa).

Residue Thr6 is modified to Phosphothreonine. Residue Ser13 is modified to Phosphoserine. 172-179 (GGAGVGKT) contributes to the ATP binding site.

It belongs to the ATPase alpha/beta chains family. As to quaternary structure, F-type ATPases have 2 components, CF(1) - the catalytic core - and CF(0) - the membrane proton channel. CF(1) has five subunits: alpha(3), beta(3), gamma(1), delta(1), epsilon(1). CF(0) has four main subunits: a(1), b(1), b'(1) and c(9-12).

Its subcellular location is the plastid. The protein resides in the chloroplast thylakoid membrane. It catalyses the reaction ATP + H2O + 4 H(+)(in) = ADP + phosphate + 5 H(+)(out). Functionally, produces ATP from ADP in the presence of a proton gradient across the membrane. The catalytic sites are hosted primarily by the beta subunits. The sequence is that of ATP synthase subunit beta, chloroplastic from Olimarabidopsis pumila (Dwarf rocket).